We begin with the raw amino-acid sequence, 435 residues long: uncharacterized protein (435 aa).

Transmembrane regions (helical) follow at residues 40–60 (LVSTWLVVWGIWHVYFVEAVF), 103–123 (VLWTSITVWLIALAVVVWLIL), 133–153 (IMLALLVPVLPFAFSYAIYNP), 195–215 (LIHEAIPLEFALGAVLAIIVL), 226–246 (ICTALAIGPGTVSVLLLAVVG), 313–333 (VAVVGFRALFGAFLLGLLFFV), 358–378 (LALPVLASALLVPLFITAVDW), 381–401 (WWVMITLDVAIVYILYAIDRP), and 414–434 (VFVCVVLVLAVIPTGSANNIG).

The protein localises to the cell membrane. This is an uncharacterized protein from Mycobacterium bovis (strain ATCC BAA-935 / AF2122/97).